Here is a 190-residue protein sequence, read N- to C-terminus: ATP synthase subunit b 1 (190 aa).

Residues 35–55 form a helical membrane-spanning segment; it reads DFVVLLGFLLFLAILFYFGVP.

This sequence belongs to the ATPase B chain family. As to quaternary structure, F-type ATPases have 2 components, F(1) - the catalytic core - and F(0) - the membrane proton channel. F(1) has five subunits: alpha(3), beta(3), gamma(1), delta(1), epsilon(1). F(0) has three main subunits: a(1), b(2) and c(10-14). The alpha and beta chains form an alternating ring which encloses part of the gamma chain. F(1) is attached to F(0) by a central stalk formed by the gamma and epsilon chains, while a peripheral stalk is formed by the delta and b chains.

It localises to the cell inner membrane. Its function is as follows. F(1)F(0) ATP synthase produces ATP from ADP in the presence of a proton or sodium gradient. F-type ATPases consist of two structural domains, F(1) containing the extramembraneous catalytic core and F(0) containing the membrane proton channel, linked together by a central stalk and a peripheral stalk. During catalysis, ATP synthesis in the catalytic domain of F(1) is coupled via a rotary mechanism of the central stalk subunits to proton translocation. In terms of biological role, component of the F(0) channel, it forms part of the peripheral stalk, linking F(1) to F(0). The protein is ATP synthase subunit b 1 of Jannaschia sp. (strain CCS1).